The sequence spans 199 residues: uncharacterized protein (199 aa).

An N-terminal signal peptide occupies residues 1 to 23; it reads MKPGCTLFFLLCSALTVTTEAHA.

This is an uncharacterized protein from Escherichia coli (strain K12).